A 284-amino-acid chain; its full sequence is Bifunctional protein FolD (284 aa).

NADP(+)-binding positions include 164 to 166 and Ser189; that span reads GRS.

This sequence belongs to the tetrahydrofolate dehydrogenase/cyclohydrolase family. In terms of assembly, homodimer.

It carries out the reaction (6R)-5,10-methylene-5,6,7,8-tetrahydrofolate + NADP(+) = (6R)-5,10-methenyltetrahydrofolate + NADPH. The catalysed reaction is (6R)-5,10-methenyltetrahydrofolate + H2O = (6R)-10-formyltetrahydrofolate + H(+). It functions in the pathway one-carbon metabolism; tetrahydrofolate interconversion. Functionally, catalyzes the oxidation of 5,10-methylenetetrahydrofolate to 5,10-methenyltetrahydrofolate and then the hydrolysis of 5,10-methenyltetrahydrofolate to 10-formyltetrahydrofolate. This is Bifunctional protein FolD from Listeria monocytogenes serotype 4b (strain F2365).